The sequence spans 237 residues: Ribonuclease PH (237 aa).

Phosphate is bound by residues Arg-86 and 124–126 (GTR).

This sequence belongs to the RNase PH family. As to quaternary structure, homohexameric ring arranged as a trimer of dimers.

It catalyses the reaction tRNA(n+1) + phosphate = tRNA(n) + a ribonucleoside 5'-diphosphate. Its function is as follows. Phosphorolytic 3'-5' exoribonuclease that plays an important role in tRNA 3'-end maturation. Removes nucleotide residues following the 3'-CCA terminus of tRNAs; can also add nucleotides to the ends of RNA molecules by using nucleoside diphosphates as substrates, but this may not be physiologically important. Probably plays a role in initiation of 16S rRNA degradation (leading to ribosome degradation) during starvation. In Shewanella pealeana (strain ATCC 700345 / ANG-SQ1), this protein is Ribonuclease PH.